The following is a 1381-amino-acid chain: EH domain-containing and endocytosis protein 1 (1381 aa).

2 EH domains span residues 14–113 (EQAF…NPAP) and 135–227 (DIAK…IRLE). EF-hand domains follow at residues 47–82 (LPGQ…IAQL) and 167–202 (LPNQ…IQLC). 4 residues coordinate Ca(2+): Asp180, Asp182, Ser184, and Glu191. Thr238 bears the Phosphothreonine mark. Phosphoserine is present on residues Ser241 and Ser244. Thr245 carries the phosphothreonine modification. Ser248 and Ser249 each carry phosphoserine. Phosphothreonine is present on Thr251. Ser265 is subject to Phosphoserine. Residues 276-311 (EKKQQFDAIFDSLDKQHAGSLSSAVLVPFFLSSRLN) form the EF-hand 3 domain. The EH 3 domain maps to 277–366 (KKQQFDAIFD…NELLQSPALG (90 aa)). Positions 389-535 (SKPSLQDMPH…SSPVKRTAST (147 aa)) are disordered. Polar residues-rich tracts occupy residues 404-424 (AVNT…NGSL) and 432-447 (PSFS…TVVQ). At Ser419 the chain carries Phosphoserine. Positions 448–470 (NNTNNSFSYDNNNGQATLQQQQP) are enriched in low complexity. 3 positions are modified to phosphothreonine: Thr450, Thr477, and Thr487. Residues 477-494 (THSSSGLKKFTPTSNFGQ) show a composition bias toward polar residues. Ser495 bears the Phosphoserine mark. Residues 593-882 (GEASAQLSNA…RELSERQMNL (290 aa)) adopt a coiled-coil conformation. Lys674 participates in a covalent cross-link: Glycyl lysine isopeptide (Lys-Gly) (interchain with G-Cter in ubiquitin). At Ser848 the chain carries Phosphoserine. Positions 898–919 (SASNTDTTTKEATSRGNVHEDT) are disordered. The span at 905 to 919 (TTKEATSRGNVHEDT) shows a compositional bias: basic and acidic residues. A phosphoserine mark is found at Ser931, Ser950, Ser964, Ser1008, Ser1012, and Ser1020. Disordered stretches follow at residues 933–1202 (LNVN…KDEF), 1214–1285 (VEED…QVSN), and 1298–1322 (SKAE…NDPI). Over residues 937-957 (RVKDDEEKTERTESDVFDRDV) the composition is skewed to basic and acidic residues. Composition is skewed to polar residues over residues 960 to 989 (LGSQ…LTET) and 1005 to 1019 (RSQS…NAPQ). Positions 1021-1036 (VRDDVELPETLEERDT) are enriched in basic and acidic residues. Polar residues-rich tracts occupy residues 1037–1049 (INNT…TGNL) and 1061–1073 (ATAS…NETT). Residue Thr1046 is modified to Phosphothreonine. Phosphoserine is present on residues Ser1069, Ser1087, Ser1093, Ser1095, Ser1096, and Ser1100. Over residues 1093-1103 (SVSSIQESPKI) the composition is skewed to polar residues. Thr1111 is subject to Phosphothreonine. Over residues 1127-1139 (SDSSSSDDDEFED) the composition is skewed to acidic residues. 2 stretches are compositionally biased toward polar residues: residues 1147 to 1164 (TVKT…SSLE) and 1178 to 1195 (TSPS…TNSI). Residues Ser1181 and Ser1187 each carry the phosphoserine modification. The span at 1214 to 1226 (VEEDNGADSESEF) shows a compositional bias: acidic residues. The tract at residues 1217–1381 (DNGADSESEF…AATNFLLDSA (165 aa)) is able to bind biological membranes. Residues 1253–1285 (NAFTGTLTSSSNPTIPKPQVQQQSTSDPAQVSN) show a composition bias toward polar residues. The residue at position 1307 (Thr1307) is a Phosphothreonine. A Glycyl lysine isopeptide (Lys-Gly) (interchain with G-Cter in ubiquitin) cross-link involves residue Lys1329. Residues 1338-1380 (ATTPKSLAVEELSGMGFTEEEAHNALEKCNWDLEAATNFLLDS) enclose the UBA domain. Position 1343 is a phosphoserine (Ser1343).

It belongs to the VDP/USO1/EDE1 family. In terms of assembly, interacts (via UBA domain) with monoubiquitin and ENT1 (via asparagine-proline-phenylalanine tripeptide motif called NPF). Interacts with PAL1 and SYP1.

The protein localises to the cytoplasm. In terms of biological role, functions at the internalization step of the clathrin-mediated endocytosis (CME) as an early-acting scaffold protein. Requires clathrin adapter proteins, ENT1/2 and YAP1801/2, for normal spatiotemporal dynamics and viability. Binds to biological membranes in a ubiquitin-dependent manner. The chain is EH domain-containing and endocytosis protein 1 (EDE1) from Saccharomyces cerevisiae (strain ATCC 204508 / S288c) (Baker's yeast).